The sequence spans 304 residues: Glutaminase (304 aa).

Positions 63, 114, 158, 165, 189, 240, and 258 each coordinate substrate.

Belongs to the glutaminase family. As to quaternary structure, homotetramer.

It carries out the reaction L-glutamine + H2O = L-glutamate + NH4(+). This is Glutaminase from Shewanella loihica (strain ATCC BAA-1088 / PV-4).